The chain runs to 305 residues: tRNA pseudouridine synthase B (305 aa).

The active-site Nucleophile is the aspartate 39.

It belongs to the pseudouridine synthase TruB family. Type 1 subfamily.

It carries out the reaction uridine(55) in tRNA = pseudouridine(55) in tRNA. In terms of biological role, responsible for synthesis of pseudouridine from uracil-55 in the psi GC loop of transfer RNAs. The protein is tRNA pseudouridine synthase B of Staphylococcus aureus (strain bovine RF122 / ET3-1).